Consider the following 199-residue polypeptide: MRIYQCHFCSSPCYPGHGIMFVRNDAKEFRFCRSKCHKAFKQRRNPRKLKWTKAFRKAAGKELAVDSTLTFAQRRNVPVRYNRELVATTLKAMARIEEIRQKRERAFYKNRMRGNKEKDFLRDKKLVESNPELLRIREVEIARKLAKEQERAESVSEQEESEEEEEDMEIDSDEEEEEQLEKQKILLKNRRRNTKKIAF.

Positions K147–K182 are disordered. A compositionally biased stretch (acidic residues) spans S156–Q179. A Phosphoserine modification is found at S172.

It belongs to the eukaryotic ribosomal protein eL24 family. As to quaternary structure, associated with nucleolar and cytoplasmic pre-60S particles. At the end of biogenesis it dissociates from cytoplasmic pre-60S particles and is likely to be exchanged for its ribosomal homolog, RPL24. Interacts (via C-terminus) with AFG2 (hexameric form); the interaction is direct, recruits AFG2 to pre-60S ribosomal particles and promotes AFG2 ATPase activity and RLP24 release from pre-60S ribosomal particles. Interacts with NOG1; the interaction is direct.

The protein localises to the cytoplasm. The protein resides in the nucleus. In terms of biological role, involved in the biogenesis of the 60S ribosomal subunit. Ensures the docking of NOG1 to pre-60S ribosomal particles. Activates and recruits ATPase AFG2 to cytoplasmic pre-60S ribosomal particles. The sequence is that of Ribosome biogenesis protein RLP24 (RLP24) from Saccharomyces cerevisiae (strain ATCC 204508 / S288c) (Baker's yeast).